Here is a 61-residue protein sequence, read N- to C-terminus: Large ribosomal subunit protein eL24 (61 aa).

Residues Cys-7, Cys-10, Cys-33, and Cys-37 each coordinate Zn(2+). The C4-type zinc finger occupies 7-37 (CSFCGKEIPPATGLMYIRNDGSILWFCSNKC).

It belongs to the eukaryotic ribosomal protein eL24 family. Part of the 50S ribosomal subunit. Forms a cluster with proteins L3 and L14. It depends on Zn(2+) as a cofactor.

Binds to the 23S rRNA. The polypeptide is Large ribosomal subunit protein eL24 (Sulfurisphaera tokodaii (strain DSM 16993 / JCM 10545 / NBRC 100140 / 7) (Sulfolobus tokodaii)).